A 116-amino-acid chain; its full sequence is Mercuric transport protein MerT (116 aa).

The next 2 membrane-spanning stretches (helical) occupy residues L16–F36 and V46–W66. Positions 24 and 25 each coordinate Hg(2+). Hg(2+) is bound by residues C76 and C82. The chain crosses the membrane as a helical span at residues I94–F114.

It belongs to the MerT family.

The protein localises to the cell inner membrane. In terms of biological role, involved in mercury resistance. Probably transfers a mercuric ion from the periplasmic Hg(2+)-binding protein MerP to the cytoplasmic mercuric reductase MerA. The protein is Mercuric transport protein MerT of Pseudomonas fluorescens.